The chain runs to 197 residues: Glycerol-3-phosphate acyltransferase (197 aa).

Helical transmembrane passes span 1–21, 50–70, 77–97, 111–131, 136–156, and 157–177; these read MNIL…GFLI, WPAL…VKIA, GLIE…PIWL, MFLA…LIVL, FVSL…FFYL, and GNYM…VIWK.

It belongs to the PlsY family. Probably interacts with PlsX.

It is found in the cell inner membrane. The catalysed reaction is an acyl phosphate + sn-glycerol 3-phosphate = a 1-acyl-sn-glycero-3-phosphate + phosphate. The protein operates within lipid metabolism; phospholipid metabolism. Its function is as follows. Catalyzes the transfer of an acyl group from acyl-phosphate (acyl-PO(4)) to glycerol-3-phosphate (G3P) to form lysophosphatidic acid (LPA). This enzyme utilizes acyl-phosphate as fatty acyl donor, but not acyl-CoA or acyl-ACP. This chain is Glycerol-3-phosphate acyltransferase, found in Prochlorococcus marinus (strain MIT 9312).